Here is a 335-residue protein sequence, read N- to C-terminus: Large ribosomal subunit protein uL3 (335 aa).

Residues 1–20 (MATIHRPRRGSLAFSPRKRA) form a disordered region.

This sequence belongs to the universal ribosomal protein uL3 family. As to quaternary structure, part of the 50S ribosomal subunit. Forms a cluster with proteins L14 and L24e.

One of the primary rRNA binding proteins, it binds directly near the 3'-end of the 23S rRNA, where it nucleates assembly of the 50S subunit. The polypeptide is Large ribosomal subunit protein uL3 (rpl3) (Methanothrix harundinacea (strain 6Ac) (Methanosaeta harundinacea)).